Reading from the N-terminus, the 265-residue chain is Hydroxyethylthiazole kinase (265 aa).

Met41 serves as a coordination point for substrate. Residues Arg117 and Ser163 each contribute to the ATP site. Gly190 is a binding site for substrate.

Belongs to the Thz kinase family. It depends on Mg(2+) as a cofactor.

The enzyme catalyses 5-(2-hydroxyethyl)-4-methylthiazole + ATP = 4-methyl-5-(2-phosphooxyethyl)-thiazole + ADP + H(+). It participates in cofactor biosynthesis; thiamine diphosphate biosynthesis; 4-methyl-5-(2-phosphoethyl)-thiazole from 5-(2-hydroxyethyl)-4-methylthiazole: step 1/1. Functionally, catalyzes the phosphorylation of the hydroxyl group of 4-methyl-5-beta-hydroxyethylthiazole (THZ). This is Hydroxyethylthiazole kinase from Pediococcus pentosaceus (strain ATCC 25745 / CCUG 21536 / LMG 10740 / 183-1w).